The chain runs to 368 residues: 2-aminoethylphosphonate--pyruvate transaminase (368 aa).

An N6-(pyridoxal phosphate)lysine modification is found at K192.

The protein belongs to the class-V pyridoxal-phosphate-dependent aminotransferase family. PhnW subfamily. As to quaternary structure, homodimer. It depends on pyridoxal 5'-phosphate as a cofactor.

It catalyses the reaction (2-aminoethyl)phosphonate + pyruvate = phosphonoacetaldehyde + L-alanine. Functionally, involved in phosphonate degradation. This is 2-aminoethylphosphonate--pyruvate transaminase from Pseudomonas entomophila (strain L48).